A 903-amino-acid chain; its full sequence is Protein translocase subunit SecA (903 aa).

ATP is bound by residues Gln-87, 105-109 (GEGKT), and Asp-512. The segment at 853–903 (KQQQLSHYEENALVTEDPNAPATAERKVGRNDPCPCGSGKKYKQCHGRLQS) is disordered. Positions 886, 888, 897, and 898 each coordinate Zn(2+). The segment covering 892-903 (KKYKQCHGRLQS) has biased composition (basic residues).

This sequence belongs to the SecA family. As to quaternary structure, monomer and homodimer. Part of the essential Sec protein translocation apparatus which comprises SecA, SecYEG and auxiliary proteins SecDF-YajC and YidC. Requires Zn(2+) as cofactor.

It is found in the cell inner membrane. The protein localises to the cytoplasm. It catalyses the reaction ATP + H2O + cellular proteinSide 1 = ADP + phosphate + cellular proteinSide 2.. In terms of biological role, part of the Sec protein translocase complex. Interacts with the SecYEG preprotein conducting channel. Has a central role in coupling the hydrolysis of ATP to the transfer of proteins into and across the cell membrane, serving both as a receptor for the preprotein-SecB complex and as an ATP-driven molecular motor driving the stepwise translocation of polypeptide chains across the membrane. The polypeptide is Protein translocase subunit SecA (Serratia proteamaculans (strain 568)).